Here is a 223-residue protein sequence, read N- to C-terminus: Phosphoenolpyruvate guanylyltransferase (223 aa).

Positions 140, 156, and 159 each coordinate phosphoenolpyruvate.

This sequence belongs to the CofC family.

The catalysed reaction is phosphoenolpyruvate + GTP + H(+) = enolpyruvoyl-2-diphospho-5'-guanosine + diphosphate. The protein operates within cofactor biosynthesis; coenzyme F420 biosynthesis. Its function is as follows. Guanylyltransferase that catalyzes the activation of phosphoenolpyruvate (PEP) as enolpyruvoyl-2-diphospho-5'-guanosine, via the condensation of PEP with GTP. It is involved in the biosynthesis of coenzyme F420, a hydride carrier cofactor. This is Phosphoenolpyruvate guanylyltransferase from Conexibacter woesei (strain DSM 14684 / CCUG 47730 / CIP 108061 / JCM 11494 / NBRC 100937 / ID131577).